Reading from the N-terminus, the 253-residue chain is 5'-nucleotidase SurE (253 aa).

4 residues coordinate a divalent metal cation: aspartate 8, aspartate 9, serine 39, and asparagine 95.

Belongs to the SurE nucleotidase family. A divalent metal cation serves as cofactor.

It localises to the cytoplasm. It carries out the reaction a ribonucleoside 5'-phosphate + H2O = a ribonucleoside + phosphate. Its function is as follows. Nucleotidase that shows phosphatase activity on nucleoside 5'-monophosphates. In Clostridium beijerinckii (strain ATCC 51743 / NCIMB 8052) (Clostridium acetobutylicum), this protein is 5'-nucleotidase SurE.